A 116-amino-acid polypeptide reads, in one-letter code: Spexin (116 aa).

Positions 1–26 (MKGPSVLAVTAVVLLLVLSALENSSG) are cleaved as a signal peptide. A propeptide spanning residues 27 to 35 (APQRLSEKR) is cleaved from the precursor. The residue at position 49 (Q49) is a Glutamine amide. 2 consecutive propeptides follow at residues 50-116 (GRRF…LFNW) and 74-116 (PDLE…LFNW). The tract at residues 52 to 77 (RFLSDQSRRKELADRPPPERRNPDLE) is disordered. Over residues 53 to 75 (FLSDQSRRKELADRPPPERRNPD) the composition is skewed to basic and acidic residues.

The protein belongs to the spexin family.

The protein localises to the secreted. Its subcellular location is the extracellular space. It is found in the cytoplasmic vesicle. The protein resides in the secretory vesicle. Functionally, plays a role as a central modulator of cardiovascular and renal function and nociception. Also plays a role in energy metabolism and storage. Inhibits adrenocortical cell proliferation with minor stimulation on corticosteroid release. In terms of biological role, acts as a ligand for galanin receptors GALR2 and GALR3. Intracerebroventricular administration of the peptide induces an increase in arterial blood pressure, a decrease in both heart rate and renal excretion and delayed natriuresis. Intraventricular administration of the peptide induces antinociceptive activity. Also induces contraction of muscarinic-like stomach smooth muscles. Intraperitoneal administration of the peptide induces a reduction in food consumption and body weight. Inhibits long chain fatty acid uptake into adipocytes. Intracerebroventricular administration of the peptide induces a decrease in heart rate, but no change in arterial pressure, and an increase in urine flow rate. Intraventricular administration of the peptide induces antinociceptive activity. This is Spexin (Spx) from Mus musculus (Mouse).